Here is a 165-residue protein sequence, read N- to C-terminus: Cysteine-rich hydrophobic domain-containing protein 2 (165 aa).

The stretch at 1-26 forms a coiled coil; the sequence is MADFDEIYEEEEDEERALEEQLLKYS. The CHIC motif (Cys-rich) motif lies at 88-106; it reads CGCLCCCCTLGCSMWPVIC.

The protein belongs to the CHIC family. Palmitoylation in the CHIC motif is required for membrane association.

Its subcellular location is the cell membrane. It is found in the cytoplasmic vesicle. The sequence is that of Cysteine-rich hydrophobic domain-containing protein 2 (CHIC2) from Homo sapiens (Human).